The sequence spans 445 residues: ATP-dependent protease ATPase subunit HslU (445 aa).

Residues I18, 60 to 65, D258, E323, and R395 contribute to the ATP site; that span reads GVGKTE.

It belongs to the ClpX chaperone family. HslU subfamily. As to quaternary structure, a double ring-shaped homohexamer of HslV is capped on each side by a ring-shaped HslU homohexamer. The assembly of the HslU/HslV complex is dependent on binding of ATP.

The protein resides in the cytoplasm. In terms of biological role, ATPase subunit of a proteasome-like degradation complex; this subunit has chaperone activity. The binding of ATP and its subsequent hydrolysis by HslU are essential for unfolding of protein substrates subsequently hydrolyzed by HslV. HslU recognizes the N-terminal part of its protein substrates and unfolds these before they are guided to HslV for hydrolysis. The sequence is that of ATP-dependent protease ATPase subunit HslU from Syntrophotalea carbinolica (strain DSM 2380 / NBRC 103641 / GraBd1) (Pelobacter carbinolicus).